We begin with the raw amino-acid sequence, 226 residues long: Glutathione peroxidase 3 (226 aa).

The N-terminal stretch at 1–24 (MARLLQASCLLSLLLAGFLPQSRG) is a signal peptide. The active site involves Sec73. Sec73 is a non-standard amino acid (selenocysteine).

It belongs to the glutathione peroxidase family. Homotetramer. Secreted in plasma.

Its subcellular location is the secreted. It catalyses the reaction 2 glutathione + H2O2 = glutathione disulfide + 2 H2O. The catalysed reaction is tert-butyl hydroperoxide + 2 glutathione = tert-butanol + glutathione disulfide + H2O. In terms of biological role, protects cells and enzymes from oxidative damage, by catalyzing the reduction of hydrogen peroxide, lipid peroxides and organic hydroperoxide, by glutathione. The sequence is that of Glutathione peroxidase 3 from Sapajus apella (Brown-capped capuchin).